The sequence spans 218 residues: Guanylate kinase (218 aa).

One can recognise a Guanylate kinase-like domain in the interval 14–193 (GLMLVLSSPS…AFAEVRGIVV (180 aa)). Position 21–28 (21–28 (SPSGAGKS)) interacts with ATP.

Belongs to the guanylate kinase family.

It is found in the cytoplasm. It carries out the reaction GMP + ATP = GDP + ADP. In terms of biological role, essential for recycling GMP and indirectly, cGMP. The protein is Guanylate kinase (gmk) of Mesorhizobium japonicum (strain LMG 29417 / CECT 9101 / MAFF 303099) (Mesorhizobium loti (strain MAFF 303099)).